The primary structure comprises 1910 residues: MMKLKEMVEAAEAKVESKPPQAAEEKAPDQAAGGAEEDVAAAPAEGGEGAEPLDQAEIEKMLFDESLGAQEYTYEEFLDLIDQPPEERGEAEDERKHWSYPRRWKVVLWNLQIQNYMDDNFSAFMEFEFGGTREECKVHKGTSVLIYATGQDKNYLRTPVIPDVSNAGPVDMHFRKAFEYRGSYLDLEREKLKIKVWEYRNWTLNHLEAVYEEALLNLATGETHVERDLYKFIKGRRSRRCRISFHLYFQELYDFELSFVKWRLVQIMPCLTLQEKIANRGKNKGGYTREATIGFKRHQLADQAKYVFQQRQVKREMQKRDSQRELLPGASRPEMLGGFADKGSARLSHLGFESAMKLPNRGTRSPSGLESNRPEDGNRNMEEIFLQHQATILASDQLEELPASLRPPLSKRRKGEDKKDGNKADGPQVKMTISLMHASSMNKGLGLVSSERPADGIPRWDNLGEIYFRGTLRDLDSTYIQVVVEDTTAPKVMRQIGYGQIPLRGVVDYSCLSTELGTPMWLALQAKMEGWGHELKEWCFGFVEGTVMVAHLPRYRQLGEVSESDSDRVYLILRIKDVDQIVTPDNRPVVDSYVEVSFDGTSRRTRTVRNTLNPVWDDEVTIPLRLPAFRDITESDVTRKGKVWLDVWGTGPGYVDHLGGCSFSLYEIFFNEKHNKRNLTAMQRIDLEANTRQSYETRVFSTSRRLAFIHKADRPSTIQFEAWTCPDILEVSGIDKLPEPERITTTSNFPRALRNTYERLKRMYAEVIEKKGLVNPDTGVGPPRFFDVEFLDQRKETHYAPTMVTRIRPPFGVDSESSVFHYCRCVPFAVKRENLVFTPEFAVQIRSGNAMDHSILMTSLLLGLPAFAFVCVGTLWDKHMHAWVATFHYDDDRACGVVKFWETTTGLVYTLKHRFRDPYTLQRLSADPEFGILKMMNIQRRKRLSILGVSVDADTPDYISRSGEDLVQSEFPTGGAKLPYRSLDIMFNNRNVWLNIQDGNPAKVWFDIWDVEQWYQFSPGLHDVPPCFIVRGFGAKVAEWQFDRAAQEIQGKVLSDITAFRATRNLPTKWNRDDVLDAFLQMGLELLHQAATARDEDFQLARLKLEDWKKAFYSKVPCSYRVRGAPLHFNTYDSKTISDAIIANVDFVESRDRSAFFSLAVMLYNLPGELVSTYVYICVTQKVTERERRRILAQKEKQSREDAQRKARKQRRKAGHEGADNGAEDKQGAEGNEEEHGDAAAAAVAEESVSAEAVQGAEEPKKVVKKGAVPRVKKRSYEQVEGTEVAAIAIERDFFTEAEAPDFKNLMTDVEHAINTHLGLSPGRVRAFQARYAEKRIVFAVGPPMDDATEADAVSSVALMEKLRDILPSMAHEEGRFQEVTGGGATLQWDGPGTNILDRIAQEQATAGEGEQQTSEGIPTRDMQVDGTAVLEEAGEKSDKKKKKKEKKEKKEKKEKKEKKEKKEKKKKKGGETAAEPEEASAVLAPPPVPAPAAAIPSVLLPTDSEDGEKEKPKEKKKEKKEKKKKKDGETDAEPDEASAVLAPPPVPVPAAAIPSILLPADGEDGEEEKPKEKKTEKKKEKHTEKKHKKKSETLPESETTAVVTVTPGEEDETSPLVPVPSSIASSEAPEPPASTRVTPAPEPKAKPGLSMGAALLAVRARSRLQRKHLAQQLSSSSSSEVSASSASSLSPSSSSSSDFAETRAKADALRARLQAAQARLAAARETEVSSSETESSETSEASFLSSDGEWDALWQSQRAAAMERQQRLQKMVSGVKAAYRRLEEENTRLAATRRRDDKLQRQVEAERERAVELLKEATRRAKEEKDLIARQPPPARDWSDTVVLSTPQIFVNSQAACAPFADSGRDEGERDEWYEVSDACSRRAESSNESRTTAGAKLRQQQLDLAGRT.

The segment covering 1-28 has biased composition (basic and acidic residues); sequence MMKLKEMVEAAEAKVESKPPQAAEEKAP. 3 disordered regions span residues 1-54, 355-377, and 398-428; these read MMKL…EPLD, AMKLPNRGTRSPSGLESNRPEDG, and LEELPASLRPPLSKRRKGEDKKDGNKADGPQ. Basic and acidic residues predominate over residues 414-423; sequence KGEDKKDGNK. Residues 557–678 enclose the C2 domain; the sequence is QLGEVSESDS…FFNEKHNKRN (122 aa). 2 stretches are compositionally biased toward basic and acidic residues: residues 1192–1205 and 1215–1228; these read LAQKEKQSREDAQR and GHEGADNGAEDKQG. Disordered stretches follow at residues 1192–1267, 1405–1424, 1431–1654, 1666–1747, 1822–1841, and 1879–1910; these read LAQK…VKKG, ATAGEGEQQTSEGIPTRDMQ, LEEA…SMGA, QRKH…FLSS, AKEEKDLIARQPPPARDWSD, and DACSRRAESSNESRTTAGAKLRQQQLDLAGRT. Composition is skewed to low complexity over residues 1239-1257 and 1405-1414; these read AAAAAVAEESVSAEAVQGA and ATAGEGEQQT. Positions 1440 to 1469 are enriched in basic residues; the sequence is KKKKKKEKKEKKEKKEKKEKKEKKEKKKKK. The span at 1492–1502 shows a compositional bias: low complexity; it reads PAAAIPSVLLP. The span at 1517–1526 shows a compositional bias: basic residues; that stretch reads KKEKKEKKKK. Positions 1550–1561 are enriched in low complexity; sequence PAAAIPSILLPA. The segment covering 1569-1584 has biased composition (basic and acidic residues); that stretch reads EKPKEKKTEKKKEKHT. Polar residues predominate over residues 1595–1604; it reads LPESETTAVV. 2 stretches are compositionally biased toward low complexity: residues 1620-1629 and 1675-1698; these read VPSSIASSEA and SSSSSSEVSASSASSLSPSSSSSS. Over residues 1701 to 1711 the composition is skewed to basic and acidic residues; that stretch reads AETRAKADALR. Composition is skewed to low complexity over residues 1712–1722 and 1729–1747; these read ARLQAAQARLA and VSSSETESSETSEASFLSS. The stretch at 1766 to 1828 forms a coiled coil; that stretch reads QQRLQKMVSG…TRRAKEEKDL (63 aa). The segment covering 1890-1904 has biased composition (polar residues); sequence ESRTTAGAKLRQQQL.

The protein resides in the membrane. Its function is as follows. Regulates microneme secretion. Probably involved in regulation of rhoptry and dense granule secretion. The chain is C2 domain-containing protein from Toxoplasma gondii.